The following is a 692-amino-acid chain: ATP-dependent DNA helicase DinG (692 aa).

Residues 16–293 (NLGNQLDNFI…AELAEYKKAA (278 aa)) form the Helicase ATP-binding domain. Residue 56–63 (AGTGIGKS) participates in ATP binding. Residue cysteine 123 coordinates [4Fe-4S] cluster. The short motif at 134–137 (NNDQ) is the DEAH box element. Residues cysteine 192 and cysteine 202 each contribute to the [4Fe-4S] cluster site. The DEAH box signature appears at 247 to 250 (DEAH). The Helicase C-terminal domain maps to 514 to 692 (LIKTLPEYLE…PPFKRVIEYS (179 aa)).

The protein belongs to the helicase family. DinG subfamily. Type 1 sub-subfamily. The cofactor is [4Fe-4S] cluster.

It carries out the reaction Couples ATP hydrolysis with the unwinding of duplex DNA at the replication fork by translocating in the 5'-3' direction. This creates two antiparallel DNA single strands (ssDNA). The leading ssDNA polymer is the template for DNA polymerase III holoenzyme which synthesizes a continuous strand.. The catalysed reaction is ATP + H2O = ADP + phosphate + H(+). DNA-dependent ATPase and 5'-3' DNA helicase. Unwinds D-loops, R-loops, forked DNA and G-quadruplex DNA. This is ATP-dependent DNA helicase DinG from Photobacterium profundum (strain SS9).